We begin with the raw amino-acid sequence, 806 residues long: Phenylalanine--tRNA ligase beta subunit (806 aa).

Positions 39 to 154 constitute a tRNA-binding domain; the sequence is SAGLKKIVVG…EAIAPGTDVY (116 aa). The B5 domain occupies 410–485; it reads PQPKVIQFDS…RLYGYDNLPS (76 aa). 4 residues coordinate Mg(2+): Asp463, Asp469, Glu472, and Glu473. An FDX-ACB domain is found at 713-806; the sequence is PKFPEVTRDI…LVATFQAKVR (94 aa).

The protein belongs to the phenylalanyl-tRNA synthetase beta subunit family. Type 1 subfamily. Tetramer of two alpha and two beta subunits. Requires Mg(2+) as cofactor.

The protein resides in the cytoplasm. The enzyme catalyses tRNA(Phe) + L-phenylalanine + ATP = L-phenylalanyl-tRNA(Phe) + AMP + diphosphate + H(+). This Latilactobacillus sakei subsp. sakei (strain 23K) (Lactobacillus sakei subsp. sakei) protein is Phenylalanine--tRNA ligase beta subunit.